The following is a 33-amino-acid chain: Helofensin-1 (33 aa).

This sequence belongs to the beta-defensin family. Helofensin subfamily. In terms of tissue distribution, expressed by the venom gland.

The protein resides in the secreted. Lethal toxin which possesses an inhibitory effect on direct electrical stimulation of the isolated hemi-diaphragm. Neither hemorrhagic nor hemolytic activities are detected. Phospholipase A2 activity, proteolytic activity and arginine esterolytic activity are absent. This chain is Helofensin-1, found in Heloderma horridum horridum (Mexican beaded lizard).